The primary structure comprises 774 residues: 5-methyltetrahydropteroyltriglutamate--homocysteine methyltransferase (774 aa).

5-methyltetrahydropteroyltri-L-glutamate is bound by residues 24–27 (RELK) and Lys-120. L-homocysteine is bound by residues 446–448 (IGS) and Glu-499. Residues 446 to 448 (IGS) and Glu-499 each bind L-methionine. 5-methyltetrahydropteroyltri-L-glutamate is bound at residue Trp-576. Asp-614 provides a ligand contact to L-homocysteine. Residue Asp-614 participates in L-methionine binding. A 5-methyltetrahydropteroyltri-L-glutamate-binding site is contributed by Glu-620. Zn(2+)-binding residues include His-656, Cys-658, and Glu-680. Residue His-709 is the Proton donor of the active site. Zn(2+) is bound at residue Cys-741.

Belongs to the vitamin-B12 independent methionine synthase family. The cofactor is Zn(2+).

It carries out the reaction 5-methyltetrahydropteroyltri-L-glutamate + L-homocysteine = tetrahydropteroyltri-L-glutamate + L-methionine. Its pathway is amino-acid biosynthesis; L-methionine biosynthesis via de novo pathway; L-methionine from L-homocysteine (MetE route): step 1/1. Catalyzes the transfer of a methyl group from 5-methyltetrahydrofolate to homocysteine resulting in methionine formation. This is 5-methyltetrahydropteroyltriglutamate--homocysteine methyltransferase from Streptomyces griseus subsp. griseus (strain JCM 4626 / CBS 651.72 / NBRC 13350 / KCC S-0626 / ISP 5235).